We begin with the raw amino-acid sequence, 365 residues long: F-box protein At1g48060 (365 aa).

Residues 1–20 (MKPQEEEEKNENMARKRSKS) form a disordered region. The F-box domain maps to 20-69 (SSSSLSIPLDIATDIFLRLPAKSVVRFSCVAKHWSSITTAPYFTNSFETR).

The sequence is that of F-box protein At1g48060 from Arabidopsis thaliana (Mouse-ear cress).